The chain runs to 362 residues: Erythritol/L-threitol dehydrogenase (362 aa).

Positions 45, 76, 77, 109, 112, 115, and 123 each coordinate Zn(2+). NAD(+)-binding residues include Ile-195 and Asp-215.

It belongs to the zinc-containing alcohol dehydrogenase family. Zn(2+) is required as a cofactor.

It catalyses the reaction erythritol + NAD(+) = D-erythrulose + NADH + H(+). It carries out the reaction L-threitol + NAD(+) = L-erythrulose + NADH + H(+). It functions in the pathway carbohydrate metabolism; erythritol degradation. It participates in carbohydrate metabolism; L-threitol degradation. Catalyzes the NAD-dependent reversible oxidation of erythritol and L-threitol. Involved in the degradation pathways of erythritol and L-threitol, that allow M.smegmatis to grow on these compounds as the sole carbon source. This chain is Erythritol/L-threitol dehydrogenase, found in Mycolicibacterium smegmatis (strain ATCC 700084 / mc(2)155) (Mycobacterium smegmatis).